The primary structure comprises 967 residues: Isoleucine--tRNA ligase (967 aa).

Residues 68–78 carry the 'HIGH' region motif; it reads PYANGTLHMGH. Glu-583 contributes to the L-isoleucyl-5'-AMP binding site. Residues 624–628 carry the 'KMSKS' region motif; it reads KMSKS. Lys-627 lines the ATP pocket. Residues Cys-937, Cys-940, Cys-957, and Cys-960 each coordinate Zn(2+).

The protein belongs to the class-I aminoacyl-tRNA synthetase family. IleS type 1 subfamily. Monomer. Requires Zn(2+) as cofactor.

The protein localises to the cytoplasm. It carries out the reaction tRNA(Ile) + L-isoleucine + ATP = L-isoleucyl-tRNA(Ile) + AMP + diphosphate. Its function is as follows. Catalyzes the attachment of isoleucine to tRNA(Ile). As IleRS can inadvertently accommodate and process structurally similar amino acids such as valine, to avoid such errors it has two additional distinct tRNA(Ile)-dependent editing activities. One activity is designated as 'pretransfer' editing and involves the hydrolysis of activated Val-AMP. The other activity is designated 'posttransfer' editing and involves deacylation of mischarged Val-tRNA(Ile). The sequence is that of Isoleucine--tRNA ligase from Prochlorococcus marinus (strain NATL2A).